The chain runs to 85 residues: Cytochrome c2 (85 aa).

Heme c-binding residues include Cys-12, Cys-15, His-16, and Met-61.

Belongs to the cytochrome c family. In terms of processing, binds 1 heme c group covalently per subunit.

In terms of biological role, cytochrome c2 is found mainly in purple, non-sulfur, photosynthetic bacteria where it functions as the electron donor to the oxidized bacteriochlorophyll in the photophosphorylation pathway. However, it may also have a role in the respiratory chain and is found in some non-photosynthetic bacteria. This Rubrivivax gelatinosus (Rhodocyclus gelatinosus) protein is Cytochrome c2.